The primary structure comprises 431 residues: Glutamyl-tRNA reductase (431 aa).

Substrate contacts are provided by residues T49 to R52, S109, E114 to Q116, and Q120. The active-site Nucleophile is C50. An NADP(+)-binding site is contributed by G189–A194.

This sequence belongs to the glutamyl-tRNA reductase family. Homodimer.

The enzyme catalyses (S)-4-amino-5-oxopentanoate + tRNA(Glu) + NADP(+) = L-glutamyl-tRNA(Glu) + NADPH + H(+). The protein operates within porphyrin-containing compound metabolism; protoporphyrin-IX biosynthesis; 5-aminolevulinate from L-glutamyl-tRNA(Glu): step 1/2. It functions in the pathway porphyrin-containing compound metabolism; chlorophyll biosynthesis. Catalyzes the NADPH-dependent reduction of glutamyl-tRNA(Glu) to glutamate 1-semialdehyde (GSA). This chain is Glutamyl-tRNA reductase, found in Synechococcus sp. (strain JA-3-3Ab) (Cyanobacteria bacterium Yellowstone A-Prime).